We begin with the raw amino-acid sequence, 365 residues long: Anhydro-N-acetylmuramic acid kinase (365 aa).

Residue 9–16 participates in ATP binding; that stretch reads GTSLDGVD.

It belongs to the anhydro-N-acetylmuramic acid kinase family.

The catalysed reaction is 1,6-anhydro-N-acetyl-beta-muramate + ATP + H2O = N-acetyl-D-muramate 6-phosphate + ADP + H(+). Its pathway is amino-sugar metabolism; 1,6-anhydro-N-acetylmuramate degradation. It functions in the pathway cell wall biogenesis; peptidoglycan recycling. Catalyzes the specific phosphorylation of 1,6-anhydro-N-acetylmuramic acid (anhMurNAc) with the simultaneous cleavage of the 1,6-anhydro ring, generating MurNAc-6-P. Is required for the utilization of anhMurNAc either imported from the medium or derived from its own cell wall murein, and thus plays a role in cell wall recycling. This is Anhydro-N-acetylmuramic acid kinase from Zymomonas mobilis subsp. mobilis (strain ATCC 31821 / ZM4 / CP4).